A 369-amino-acid chain; its full sequence is tRNA-specific 2-thiouridylase MnmA (369 aa).

ATP contacts are provided by residues 12 to 19 and Met-38; that span reads GMSGGVDS. Residues 98 to 100 are interaction with target base in tRNA; the sequence is NPD. Cys-103 functions as the Nucleophile in the catalytic mechanism. Cysteines 103 and 200 form a disulfide. Gly-128 serves as a coordination point for ATP. Positions 150–152 are interaction with tRNA; sequence KDQ. The active-site Cysteine persulfide intermediate is the Cys-200. The segment at 312-313 is interaction with tRNA; it reads RY.

This sequence belongs to the MnmA/TRMU family.

The protein resides in the cytoplasm. It catalyses the reaction S-sulfanyl-L-cysteinyl-[protein] + uridine(34) in tRNA + AH2 + ATP = 2-thiouridine(34) in tRNA + L-cysteinyl-[protein] + A + AMP + diphosphate + H(+). In terms of biological role, catalyzes the 2-thiolation of uridine at the wobble position (U34) of tRNA, leading to the formation of s(2)U34. The polypeptide is tRNA-specific 2-thiouridylase MnmA (Tolumonas auensis (strain DSM 9187 / NBRC 110442 / TA 4)).